The primary structure comprises 208 residues: LexA repressor (208 aa).

Positions valine 30–serine 50 form a DNA-binding region, H-T-H motif. Active-site for autocatalytic cleavage activity residues include serine 129 and lysine 167.

The protein belongs to the peptidase S24 family. Homodimer.

The catalysed reaction is Hydrolysis of Ala-|-Gly bond in repressor LexA.. Represses a number of genes involved in the response to DNA damage (SOS response), including recA and lexA. In the presence of single-stranded DNA, RecA interacts with LexA causing an autocatalytic cleavage which disrupts the DNA-binding part of LexA, leading to derepression of the SOS regulon and eventually DNA repair. The polypeptide is LexA repressor (Lactobacillus acidophilus (strain ATCC 700396 / NCK56 / N2 / NCFM)).